The primary structure comprises 261 residues: MDMKRRIHLELRNRTPAAVRELVLDNCKSNDGKIEGLTAEFVNLEFLSLINVGLISVSNLPKLPKLKKLELSDNRICGGLDMLAEKLPNLTHLNLSGNKLKDISTLEPLKKLECLKSLDLFNCEVTNLNDYRESVFKLLPQLTYLDGYDREDREAPDSDAEVDGVDEEEDDEEGEDEDKEEDEDGEEEEFDDEEDDDEDEDVEGEEDEDEVSGEEEEFGHDGEVDEDDEDEDEDEDEDEEEEESGKGEKRKRETDDEGEDD.

LRR repeat units follow at residues 16 to 40 (PAAV…LTAE), 43 to 64 (NLEF…PKLP), 65 to 87 (KLKK…AEKL), and 89 to 110 (NLTH…EPLK). Position 86 is an N6-acetyllysine (Lys86). Residues 123–161 (CEVTNLNDYRESVFKLLPQLTYLDGYDREDREAPDSDAE) enclose the LRRCT domain. Residues 149 to 261 (DREDREAPDS…RETDDEGEDD (113 aa)) form a disordered region. Residues 157 to 243 (DSDAEVDGVD…DEDEDEEEEE (87 aa)) show a composition bias toward acidic residues. A Phosphoserine modification is found at Ser158. Residues 244–254 (SGKGEKRKRET) are compositionally biased toward basic and acidic residues. Positions 249–252 (KRKR) match the Nuclear localization signal motif. Thr254 is modified (phosphothreonine).

The protein belongs to the ANP32 family. In terms of assembly, interacts with histones H3 and H4. Interacts with KLF5; this interaction induces promoter region-specific histone incorporation and inhibition of histone acetylation by ANP32B. Post-translationally, some Glu residues are glycylated by TTLL8; a modification that generates a side chains of glycine on the gamma-carboxyl groups of specific glutamate residues. Directly cleaved by caspase-3/CASP3.

The protein resides in the nucleus. In terms of biological role, multifunctional protein that is involved in the regulation of many processes including cell proliferation, apoptosis, cell cycle progression or transcription. Regulates the proliferation of neuronal stem cells, differentiation of leukemic cells and progression from G1 to S phase of the cell cycle. As negative regulator of caspase-3-dependent apoptosis, may act as an antagonist of ANP32A in regulating tissue homeostasis. Exhibits histone chaperone properties, able to recruit histones to certain promoters, thus regulating the transcription of specific genes. Also plays an essential role in the nucleocytoplasmic transport of specific mRNAs via the uncommon nuclear mRNA export receptor XPO1/CRM1. Participates in the regulation of adequate adaptive immune responses by acting on mRNA expression and cell proliferation. The protein is Acidic leucine-rich nuclear phosphoprotein 32 family member B (ANP32B) of Bos taurus (Bovine).